The chain runs to 143 residues: MIIHTKYHGQMNIKEEQIILFESGIPGFLEEKQFVILPLSEDSPFVALQSVTSENLAFIVVSPFIFFKNYEFDLDESTAELLDIDNIQDVEVMTILTMAEPFEKSTANLLAPIIVNRKNMMAKQVVLHDSSYTTKHPIGGESC.

The protein belongs to the FliW family. As to quaternary structure, interacts with flagellin in a 1:1 complex. Two molecules interact with each CsrA dimer; cannot interact with both flagellin and CsrA simultaneously. Has a higher affinity for CsrA than for flagellin. Interacts directly with flagellin (hag), forms a 3-way complex of Hag, FliS and FliW in which Flis and FliW do not directly interact. Interaction with Hag may occur via the C-terminus of Hag.

The protein localises to the cytoplasm. Acts as an anti-CsrA protein, binds CsrA and prevents it from repressing translation of its target genes, one of which is flagellin. Binds to flagellin (hag), which is implicated in polymerization, and participates in the assembly of the flagellum. An antagonist to translational regulator CsrA, it binds CsrA at an allosteric site and non-competitively inhibits CsrA binding to hag RNA. Partner switching by flagellin between FliW and CsrA provides a flagellar assembly checkpoint to tightly control the timing of flagellin synthesis. Flagellin binds to assembly factor FliW, freeing translation regulator CsrA to repress translation of the flagellin mRNA. When the flagellar hook is assembled flagellin is secreted, depleting intracellular flagellin, which frees FliW to interact with CsrA and inhibits CsrA binding to mRNA. This derepresses flagellin translation and provides protein for flagellar assembly. Once the flagellar filament is completed cytoplasmic flagellin levels rise and CsrA translation repression of flagellin reinitiates. Binds to CsrA and displaces it from hag mRNA. Binds to hag mRNA itself, but only at much higher concentrations than those required to displace CsrA. The protein is Flagellar assembly factor FliW of Bacillus subtilis (strain 168).